The primary structure comprises 349 residues: Interferon-stimulated 20 kDa exonuclease-like 2 (349 aa).

Disordered regions lie at residues 1–100 (MSTL…AAVP) and 126–166 (ALPK…KYSG). A compositionally biased stretch (basic and acidic residues) spans 14–23 (PPKKALEGNA). Positions 24-47 (KHRKFVKKRRLLERKGFLNKKKQP) are enriched in basic residues. Positions 54–66 (LHSEPSQKGETPR) are enriched in basic and acidic residues. The segment covering 70 to 87 (TWKATPLPKKKTTAASSS) has biased composition (low complexity). The span at 130-142 (IKSHPTRPQKKGS) shows a compositional bias: basic residues. An Exonuclease domain is found at 175–331 (MVAIDCEMVG…EDAQATMELY (157 aa)).

It localises to the nucleus. It is found in the nucleolus. 3'-&gt; 5'-exoribonuclease involved in ribosome biogenesis in the processing of the 12S pre-rRNA. Displays a strong specificity for a 3'-end containing a free hydroxyl group. In Bos taurus (Bovine), this protein is Interferon-stimulated 20 kDa exonuclease-like 2 (ISG20L2).